The primary structure comprises 301 residues: Methionyl-tRNA formyltransferase (301 aa).

(6S)-5,6,7,8-tetrahydrofolate is bound at residue 109 to 112; that stretch reads SLLP.

This sequence belongs to the Fmt family.

The enzyme catalyses L-methionyl-tRNA(fMet) + (6R)-10-formyltetrahydrofolate = N-formyl-L-methionyl-tRNA(fMet) + (6S)-5,6,7,8-tetrahydrofolate + H(+). Attaches a formyl group to the free amino group of methionyl-tRNA(fMet). The formyl group appears to play a dual role in the initiator identity of N-formylmethionyl-tRNA by promoting its recognition by IF2 and preventing the misappropriation of this tRNA by the elongation apparatus. This Ruegeria pomeroyi (strain ATCC 700808 / DSM 15171 / DSS-3) (Silicibacter pomeroyi) protein is Methionyl-tRNA formyltransferase.